A 775-amino-acid polypeptide reads, in one-letter code: K(+)-insensitive pyrophosphate-energized proton pump (775 aa).

5 helical membrane passes run 9–29, 65–85, 108–128, 160–180, and 185–205; these read SLAVWAVLVISLLGIGYAFFI, ISILIVILTFVLAASVFIIPP, AVAFLMGSLFSYAVGFVGMNV, MLTVGLGLLGGTLIFMVFGIA, and LLGFGFGGSLIALFMRVGGGI. Lys-208 provides a ligand contact to substrate. 3 residues coordinate Mg(2+): Asp-211, Asp-215, and Asp-241. Helical transmembrane passes span 259-279, 288-308, 327-347, 359-379, 413-433, and 442-462; these read VTLVSALILGLVLGDAVVGTI, FIIFPLVLRAIGVVASVIGNL, FYIAAGLAIAASAAATPVFMV, FFATLSGVVLAIVLDKLTEYF, SVWAILVISASIFTSVLIYAG, and AILYGVSLTGIGMLLLTGNTI. Position 472 (Asp-472) interacts with Mg(2+). The next 4 helical transmembrane spans lie at 508–528, 555–575, 622–642, and 644–664; these read IAIGSAVIAAVALYGSYFTDV, PVFIGLLIGGAVPFLFSALTI, LISLGLIAVMVPIIVGFTLGV, and ALGGFLAGIILTGQLMAVFQA. Ca(2+) contacts are provided by Asp-671, Asp-697, and Asp-701. A substrate-binding site is contributed by Lys-704. A run of 2 helical transmembrane segments spans residues 710–730 and 735–755; these read ALNPMIKVINLVALIIAPIVV and GSPGVIIAMIICGAALVWAIW.

Belongs to the H(+)-translocating pyrophosphatase (TC 3.A.10) family. K(+)-insensitive subfamily. As to quaternary structure, homodimer. The cofactor is Mg(2+).

Its subcellular location is the cell membrane. It catalyses the reaction diphosphate + H2O + H(+)(in) = 2 phosphate + 2 H(+)(out). In terms of biological role, proton pump that utilizes the energy of pyrophosphate hydrolysis as the driving force for proton movement across the membrane. Generates a proton motive force. This chain is K(+)-insensitive pyrophosphate-energized proton pump, found in Chloroflexus aurantiacus (strain ATCC 29366 / DSM 635 / J-10-fl).